The primary structure comprises 59 residues: Large ribosomal subunit protein bL32 (59 aa).

Residues 1–34 (MAVQKSKVTRSRRGQRRSHDALTGPTLSVDKTTG) form a disordered region. The span at 7 to 16 (KVTRSRRGQR) shows a compositional bias: basic residues.

The protein belongs to the bacterial ribosomal protein bL32 family.

This is Large ribosomal subunit protein bL32 from Marinomonas sp. (strain MWYL1).